A 475-amino-acid polypeptide reads, in one-letter code: Argininosuccinate lyase 1 (475 aa).

Belongs to the lyase 1 family. Argininosuccinate lyase subfamily.

It localises to the cytoplasm. The enzyme catalyses 2-(N(omega)-L-arginino)succinate = fumarate + L-arginine. It functions in the pathway amino-acid biosynthesis; L-arginine biosynthesis; L-arginine from L-ornithine and carbamoyl phosphate: step 3/3. In Pseudomonas fluorescens (strain Pf0-1), this protein is Argininosuccinate lyase 1.